Consider the following 166-residue polypeptide: Protein-export protein SecB (166 aa).

The protein belongs to the SecB family. In terms of assembly, homotetramer, a dimer of dimers. One homotetramer interacts with 1 SecA dimer.

Its subcellular location is the cytoplasm. Its function is as follows. One of the proteins required for the normal export of preproteins out of the cell cytoplasm. It is a molecular chaperone that binds to a subset of precursor proteins, maintaining them in a translocation-competent state. It also specifically binds to its receptor SecA. This Rhizorhabdus wittichii (strain DSM 6014 / CCUG 31198 / JCM 15750 / NBRC 105917 / EY 4224 / RW1) (Sphingomonas wittichii) protein is Protein-export protein SecB.